Here is a 492-residue protein sequence, read N- to C-terminus: Catalase isozyme 2 (492 aa).

Residues His-65 and Asn-138 contribute to the active site. Tyr-348 lines the heme pocket.

It belongs to the catalase family. As to quaternary structure, homotetramer. It depends on heme as a cofactor.

Its subcellular location is the peroxisome. The catalysed reaction is 2 H2O2 = O2 + 2 H2O. Functionally, occurs in almost all aerobically respiring organisms and serves to protect cells from the toxic effects of hydrogen peroxide. The chain is Catalase isozyme 2 (CAT2) from Nicotiana plumbaginifolia (Leadwort-leaved tobacco).